Reading from the N-terminus, the 380-residue chain is NF-kappa-B inhibitor-like protein 1 (380 aa).

A disordered region spans residues 1–34; the sequence is MSNPSPQVPEGEASTSVCRPKSSMASTSRRQRRE. Residues 13–28 are compositionally biased toward polar residues; sequence ASTSVCRPKSSMASTS. 2 ANK repeats span residues 64–93 and 97–133; these read GQPP…DPAH and HGDT…IKNK. Disordered regions lie at residues 131 to 167 and 185 to 293; these read KNKD…EWRQ and EDDA…RGSL. Serine 150 bears the Phosphoserine mark. Residues 150 to 159 show a composition bias toward acidic residues; the sequence is SAEEEEEDEA. 2 stretches are compositionally biased toward basic and acidic residues: residues 204 to 221 and 236 to 272; these read RMAR…ETEG and RQQE…RDPV.

In terms of assembly, interacts with CACTIN (via N-terminal domain); the interaction occurs in a pro-inflammatory-independent manner.

Its subcellular location is the nucleus. Involved in the regulation of innate immune response. Acts as negative regulator of Toll-like receptor and interferon-regulatory factor (IRF) signaling pathways. Contributes to the negative regulation of transcriptional activation of NF-kappa-B target genes in response to endogenous pro-inflammatory stimuli. The polypeptide is NF-kappa-B inhibitor-like protein 1 (NFKBIL1) (Sus scrofa (Pig)).